We begin with the raw amino-acid sequence, 95 residues long: Large ribosomal subunit protein uL23 (95 aa).

The protein belongs to the universal ribosomal protein uL23 family. As to quaternary structure, part of the 50S ribosomal subunit. Contacts protein L29, and trigger factor when it is bound to the ribosome.

In terms of biological role, one of the early assembly proteins it binds 23S rRNA. One of the proteins that surrounds the polypeptide exit tunnel on the outside of the ribosome. Forms the main docking site for trigger factor binding to the ribosome. The protein is Large ribosomal subunit protein uL23 of Coxiella burnetii (strain RSA 493 / Nine Mile phase I).